Consider the following 423-residue polypeptide: Serine--tRNA ligase 2 (423 aa).

231-233 contributes to the L-serine binding site; it reads TAE. Residue 262-264 participates in ATP binding; that stretch reads RSE. L-serine is bound at residue E285. Residue 349–352 coordinates ATP; sequence EISS. S384 contacts L-serine.

It belongs to the class-II aminoacyl-tRNA synthetase family. Type-1 seryl-tRNA synthetase subfamily. In terms of assembly, homodimer. The tRNA molecule binds across the dimer.

It is found in the cytoplasm. It carries out the reaction tRNA(Ser) + L-serine + ATP = L-seryl-tRNA(Ser) + AMP + diphosphate + H(+). The catalysed reaction is tRNA(Sec) + L-serine + ATP = L-seryl-tRNA(Sec) + AMP + diphosphate + H(+). The protein operates within aminoacyl-tRNA biosynthesis; selenocysteinyl-tRNA(Sec) biosynthesis; L-seryl-tRNA(Sec) from L-serine and tRNA(Sec): step 1/1. Its function is as follows. Catalyzes the attachment of serine to tRNA(Ser). Is also able to aminoacylate tRNA(Sec) with serine, to form the misacylated tRNA L-seryl-tRNA(Sec), which will be further converted into selenocysteinyl-tRNA(Sec). This chain is Serine--tRNA ligase 2, found in Enterococcus faecalis (strain ATCC 700802 / V583).